Reading from the N-terminus, the 456-residue chain is Exodeoxyribonuclease 7 large subunit (456 aa).

Belongs to the XseA family. As to quaternary structure, heterooligomer composed of large and small subunits.

The protein localises to the cytoplasm. It catalyses the reaction Exonucleolytic cleavage in either 5'- to 3'- or 3'- to 5'-direction to yield nucleoside 5'-phosphates.. Functionally, bidirectionally degrades single-stranded DNA into large acid-insoluble oligonucleotides, which are then degraded further into small acid-soluble oligonucleotides. This is Exodeoxyribonuclease 7 large subunit from Lactobacillus johnsonii (strain CNCM I-12250 / La1 / NCC 533).